We begin with the raw amino-acid sequence, 216 residues long: Protein ORM2 (216 aa).

Residues 1-50 (MIDRTKNESPAFEESPLTPNVSNLKPFPSQSNKISTPVTDHRRRRSSSVI) are disordered. Over 1–78 (MIDRTKNESP…NMNATWVDQR (78 aa)) the chain is Cytoplasmic. Phosphoserine is present on residues S9 and S15. Residues 17–38 (LTPNVSNLKPFPSQSNKISTPV) show a composition bias toward polar residues. Phosphothreonine is present on T18. A phosphoserine mark is found at S22, S29, and S51. Residues 79–99 (GAWLIHIVVIVLLRLFYSLFG) traverse the membrane as a helical segment. Topologically, residues 100 to 103 (STPK) are extracellular. The chain crosses the membrane as a helical span at residues 104–124 (WTWTLTNMTYIIGFYIMFHLV). Residues 125 to 148 (KGTPFDFNGGAYDNLTMWEQINDE) lie on the Cytoplasmic side of the membrane. A helical transmembrane segment spans residues 149–169 (TLYTPTRKFLLIVPIVLFLIS). Topologically, residues 170 to 177 (NQYYRNDM) are extracellular. Residues 178–198 (TLFLSNLAVTVLIGVVPKLGI) form a helical membrane-spanning segment. Over 199–216 (THRLRISIPGITGRAQIS) the chain is Cytoplasmic.

It belongs to the ORM family. Component of the SPOTS complex, at least composed of LCB1/2 (LCB1 and/or LCB2), ORM1/2 (ORM1 and/or ORM2), SAC1 and TSC3. Post-translationally, phosphorylated in case of disruption of sphingolipid synthesis. Phosphorylation regulates the inhibitory activity of serine palmitoyltransferases (LCB1 and LCB2).

It is found in the endoplasmic reticulum membrane. Component of the SPOTS complex that acts as a negative regulator of sphingolipid synthesis. Acts by inhibiting serine palmitoyltransferases (LCB1 and LCB2) activity. Along with ORM1, plays a role in the phosphorylation of LAC1 and YPK1, the distribution of actin patches between mother and daughter cells, and in endocytosis. This is Protein ORM2 (ORM2) from Saccharomyces cerevisiae (strain ATCC 204508 / S288c) (Baker's yeast).